The following is a 431-amino-acid chain: Transposase for insertion sequence element IS232 (431 aa).

Residues 20-79 (PNFKKLMGNLKMKINKSQLARELNVDRRTIDKYLNGFTPKGTKNKTSKIDTYYEVIAALL) enclose the HTH IS21-type domain. The segment at residues 35-54 (KSQLARELNVDRRTIDKYLN) is a DNA-binding region (H-T-H motif). The region spanning 140-315 (YETPPGEQAQ…IPVFALKQEK (176 aa)) is the Integrase catalytic domain.

The protein belongs to the transposase IS21/IS408/IS1162 family.

Functionally, involved in the transposition of the insertion sequence. This chain is Transposase for insertion sequence element IS232, found in Bacillus thuringiensis subsp. berliner.